We begin with the raw amino-acid sequence, 754 residues long: Lysyl oxidase homolog 3 (754 aa).

A signal peptide spans 1 to 26; that stretch reads MRAVSVWYCCPWGLLLLHCLCSFSVG. 4 consecutive SRCR domains span residues 45 to 146, 170 to 283, 308 to 408, and 418 to 526; these read FRLA…VICK, VRLR…VSCV, VRLK…VRCN, and IRLS…VICS. Intrachain disulfides connect Cys-71–Cys-135, Cys-84–Cys-145, Cys-115–Cys-125, Cys-202–Cys-272, Cys-215–Cys-282, Cys-249–Cys-259, Cys-333–Cys-397, Cys-346–Cys-407, Cys-377–Cys-387, Cys-447–Cys-512, Cys-460–Cys-525, Cys-493–Cys-503, Cys-555–Cys-561, Cys-607–Cys-655, Cys-639–Cys-645, Cys-667–Cys-677, and Cys-714–Cys-728. Asn-112 carries N-linked (GlcNAc...) asparagine glycosylation. Asn-267 carries an N-linked (GlcNAc...) asparagine glycan. Residues Asn-391 and Asn-482 are each glycosylated (N-linked (GlcNAc...) asparagine). The interval 530–733 is lysyl-oxidase like; that stretch reads SDLLLHSALV…WVHNCHIGDA (204 aa). His-608, His-610, and His-612 together coordinate Cu cation. An N-linked (GlcNAc...) asparagine glycan is attached at Asn-626. Residues 635-671 constitute a cross-link (lysine tyrosylquinone (Lys-Tyr)); sequence KASFCLEDTECQEDVSKRYECANFGEQGITVGCWDLY. Tyr-671 is subject to 2',4',5'-topaquinone.

It belongs to the lysyl oxidase family. The cofactor is Cu cation. Lysine tyrosylquinone residue serves as cofactor. The lysine tyrosylquinone cross-link (LTQ) is generated by condensation of the epsilon-amino group of a lysine with a topaquinone produced by oxidation of tyrosine. As to expression, expressed in palate: predominantly present in the palate mesenchyme and tongue (at protein level). In spine, expressed in the original intervertebral disk, cartilage primordia, anterior and posterior longitudinal ligaments, meninges of spinal cord, lung and heart. In eyes, strongly expressed in the skin of the eyelid and weakly expressed in the cornea and sclera. In lung, predominantly expressed in the pulmonary mesenchyme. In developing muscle, expressed at myofiber ends (at protein level).

Its subcellular location is the secreted. It is found in the extracellular space. The protein resides in the cytoplasm. It localises to the nucleus. It catalyses the reaction L-lysyl-[protein] + O2 + H2O = (S)-2-amino-6-oxohexanoyl-[protein] + H2O2 + NH4(+). The enzyme catalyses N(6)-acetyl-L-lysyl-[protein] + O2 + H2O = acetamide + (S)-2-amino-6-oxohexanoyl-[protein] + H2O2. Functionally, protein-lysine 6-oxidase that mediates the oxidation of peptidyl lysine residues to allysine in target proteins. Catalyzes the post-translational oxidative deamination of peptidyl lysine residues in precursors of elastin and different types of collagens, a prerequisite in the formation of cross-links between collagens and elastin. Required for somite boundary formation by catalyzing oxidation of fibronectin (FN1), enhancing integrin signaling in myofibers and their adhesion to the myotendinous junction (MTJ). Acts as a regulator of inflammatory response by inhibiting differentiation of naive CD4(+) T-cells into T-helper Th17 or regulatory T-cells (Treg): acts by interacting with STAT3 in the nucleus and catalyzing both deacetylation and oxidation of lysine residues on STAT3, leading to disrupt STAT3 dimerization and inhibit STAT3 transcription activity. Oxidation of lysine residues to allysine on STAT3 preferentially takes place on lysine residues that are acetylated. Also able to catalyze deacetylation of lysine residues on STAT3. The protein is Lysyl oxidase homolog 3 of Mus musculus (Mouse).